Reading from the N-terminus, the 144-residue chain is MRLNSLSPAEGAKHSAKRLGRGIGSGLGKTGGRGHKGQKSRTGGGVRRGFEGGQMPLYRRLPKFGFTSLKSFHVAEIRLNDLAKVDGNEVTLESLKAANVITKDILSVKVILAGKIEKAVVVKGLGVTKGAKAAIEAAGGSIEE.

The segment at 1–52 (MRLNSLSPAEGAKHSAKRLGRGIGSGLGKTGGRGHKGQKSRTGGGVRRGFEG) is disordered. Positions 21 to 31 (RGIGSGLGKTG) are enriched in gly residues.

It belongs to the universal ribosomal protein uL15 family. Part of the 50S ribosomal subunit.

Functionally, binds to the 23S rRNA. The polypeptide is Large ribosomal subunit protein uL15 (Actinobacillus pleuropneumoniae serotype 5b (strain L20)).